The primary structure comprises 267 residues: MDPQLTEVSQQFERFKAAFARKDYNTCSDLLSQLKVLLTKFTSLPPLFENSPNAAKELTIARDIYEHAVVLSVKTEDQDAFERDFFQLKPYYVDARNRIPQSPQENLILGLNLLRLLVQNRIAEFHTELELLSSATLEDPCIKHAVELEQSFMEGAYNRVLSARQTAPDATYVYFMDLLAKTIRDEIAGCSEKAYDYVSISDARQMLLFSSDQELLTYVTDEHPEWEVKEGFVVFQKAKETAPCKEIPSLQLINQTLSYARELERIV.

The residue at position 1 (Met1) is an N-acetylmethionine. The region spanning 79–251 is the PCI domain; the sequence is DAFERDFFQL…APCKEIPSLQ (173 aa).

This sequence belongs to the proteasome subunit S14 family. In terms of assembly, component of the 19S regulatory particle (RP/PA700) lid subcomplex of the 26S proteasome. The 26S proteasome is composed of a core protease (CP), known as the 20S proteasome, capped at one or both ends by the 19S regulatory particle (RP/PA700). The RP/PA700 complex is composed of at least 17 different subunits in two subcomplexes, the base and the lid, which form the portions proximal and distal to the 20S proteolytic core, respectively. Interacts with PUB22 and PUB23. Binds to the translation initiation factors TIF3E1. Interacts with UCH1 and UCH2. Post-translationally, ubiquitinated by PUB22 and PUB23. Ubiquitous with highest expression in flowers.

Its function is as follows. Acts as a regulatory subunit of the 26S proteasome which is involved in the ATP-dependent degradation of ubiquitinated proteins. May help to control the degradation of one or more factors that repress cytokinin signaling. Plays an important role for balancing cell expansion with cell proliferation rates during shoot development. This Arabidopsis thaliana (Mouse-ear cress) protein is 26S proteasome non-ATPase regulatory subunit 8 homolog A.